We begin with the raw amino-acid sequence, 280 residues long: Ribosomal RNA small subunit methyltransferase I (280 aa).

The protein belongs to the methyltransferase superfamily. RsmI family.

It localises to the cytoplasm. It carries out the reaction cytidine(1402) in 16S rRNA + S-adenosyl-L-methionine = 2'-O-methylcytidine(1402) in 16S rRNA + S-adenosyl-L-homocysteine + H(+). Its function is as follows. Catalyzes the 2'-O-methylation of the ribose of cytidine 1402 (C1402) in 16S rRNA. The protein is Ribosomal RNA small subunit methyltransferase I of Rickettsia prowazekii (strain Madrid E).